Reading from the N-terminus, the 273-residue chain is Putative pyruvate, phosphate dikinase regulatory protein (273 aa).

ADP is bound at residue 149–156 (GPSRTSKT).

It belongs to the pyruvate, phosphate/water dikinase regulatory protein family. PDRP subfamily.

The catalysed reaction is N(tele)-phospho-L-histidyl/L-threonyl-[pyruvate, phosphate dikinase] + ADP = N(tele)-phospho-L-histidyl/O-phospho-L-threonyl-[pyruvate, phosphate dikinase] + AMP + H(+). It catalyses the reaction N(tele)-phospho-L-histidyl/O-phospho-L-threonyl-[pyruvate, phosphate dikinase] + phosphate + H(+) = N(tele)-phospho-L-histidyl/L-threonyl-[pyruvate, phosphate dikinase] + diphosphate. In terms of biological role, bifunctional serine/threonine kinase and phosphorylase involved in the regulation of the pyruvate, phosphate dikinase (PPDK) by catalyzing its phosphorylation/dephosphorylation. This Rickettsia africae (strain ESF-5) protein is Putative pyruvate, phosphate dikinase regulatory protein.